The chain runs to 102 residues: Large ribosomal subunit protein bL21 (102 aa).

The protein belongs to the bacterial ribosomal protein bL21 family. As to quaternary structure, part of the 50S ribosomal subunit. Contacts protein L20.

Functionally, this protein binds to 23S rRNA in the presence of protein L20. This chain is Large ribosomal subunit protein bL21, found in Geobacillus sp. (strain WCH70).